We begin with the raw amino-acid sequence, 338 residues long: 4-hydroxythreonine-4-phosphate dehydrogenase (338 aa).

Residues His-140 and Thr-141 each contribute to the substrate site. 3 residues coordinate a divalent metal cation: His-172, His-217, and His-271. Lys-279, Asn-288, and Arg-297 together coordinate substrate.

It belongs to the PdxA family. As to quaternary structure, homodimer. The cofactor is a divalent metal cation.

It localises to the cytoplasm. The catalysed reaction is 4-(phosphooxy)-L-threonine + NAD(+) = 3-amino-2-oxopropyl phosphate + CO2 + NADH. Its pathway is cofactor biosynthesis; pyridoxine 5'-phosphate biosynthesis; pyridoxine 5'-phosphate from D-erythrose 4-phosphate: step 4/5. Its function is as follows. Catalyzes the NAD(P)-dependent oxidation of 4-(phosphooxy)-L-threonine (HTP) into 2-amino-3-oxo-4-(phosphooxy)butyric acid which spontaneously decarboxylates to form 3-amino-2-oxopropyl phosphate (AHAP). This Prosthecochloris aestuarii (strain DSM 271 / SK 413) protein is 4-hydroxythreonine-4-phosphate dehydrogenase.